Reading from the N-terminus, the 278-residue chain is HTH-type transcriptional activator RhaS (278 aa).

Positions 174 to 272 (NLLLAWLEDH…NWSPRDIRQG (99 aa)) constitute an HTH araC/xylS-type domain. 2 consecutive DNA-binding regions (H-T-H motif) follow at residues 191 to 212 (DAVA…KQQT) and 239 to 262 (VTDI…HREF).

As to quaternary structure, binds DNA as a dimer.

The protein localises to the cytoplasm. Activates expression of the rhaBAD and rhaT operons. In Shigella boydii serotype 18 (strain CDC 3083-94 / BS512), this protein is HTH-type transcriptional activator RhaS.